Reading from the N-terminus, the 167-residue chain is Cytochrome b6-f complex subunit 4 (167 aa).

The next 3 helical transmembrane spans lie at 36–56 (LLYI…GLAV), 95–115 (LLGV…PFLE), and 131–151 (TVFL…TLPI).

It belongs to the cytochrome b family. PetD subfamily. As to quaternary structure, the 4 large subunits of the cytochrome b6-f complex are cytochrome b6, subunit IV (17 kDa polypeptide, petD), cytochrome f and the Rieske protein, while the 4 small subunits are petG, petL, petM and petN. The complex functions as a dimer.

It is found in the plastid. It localises to the chloroplast thylakoid membrane. Component of the cytochrome b6-f complex, which mediates electron transfer between photosystem II (PSII) and photosystem I (PSI), cyclic electron flow around PSI, and state transitions. This chain is Cytochrome b6-f complex subunit 4, found in Calycanthus floridus var. glaucus (Eastern sweetshrub).